A 334-amino-acid polypeptide reads, in one-letter code: Pre-mRNA leakage protein 39 (334 aa).

As to quaternary structure, interacts with MLP1 and MLP2.

The protein resides in the nucleus membrane. Functionally, involved in the nuclear retention of improperly spliced pre-mRNAs. This chain is Pre-mRNA leakage protein 39 (PML39), found in Saccharomyces cerevisiae (strain ATCC 204508 / S288c) (Baker's yeast).